The primary structure comprises 68 residues: Large ribosomal subunit protein bL33c (68 aa).

Belongs to the bacterial ribosomal protein bL33 family.

It is found in the plastid. The protein resides in the chloroplast. This chain is Large ribosomal subunit protein bL33c, found in Amborella trichopoda.